The sequence spans 261 residues: Cytochrome c oxidase subunit 3 (261 aa).

At 1 to 15 (MTHQTHAYHMVNPSP) the chain is on the mitochondrial matrix side. Residues 16 to 34 (WPLTGALSALLMTSGLTMW) traverse the membrane as a helical segment. The Mitochondrial intermembrane segment spans residues 35–40 (FHFNST). A helical membrane pass occupies residues 41-66 (ILLMLGLTTNMLTMYQWWRDIIREST). Residues 67–72 (FQGHHT) are Mitochondrial matrix-facing. A helical membrane pass occupies residues 73-105 (PVVQKGLRYGMILFIISEVLFFTGFFWAFYHSS). At 106–128 (LAPTPELGGCWPPTGIHPLNPLE) the chain is on the mitochondrial intermembrane side. Residues 129–152 (VPLLNTSVLLASGVSITWAHHSLM) traverse the membrane as a helical segment. The Mitochondrial matrix portion of the chain corresponds to 153 to 155 (EGH). A helical membrane pass occupies residues 156 to 183 (RNHMLQALFITIALGVYFTLLQASEYYE). Residues 184–190 (APFTISD) are Mitochondrial intermembrane-facing. The helical transmembrane segment at 191 to 223 (GVYGSTFFVATGFHGLHVIIGSTFLIVCFFRQL) threads the bilayer. Residues 224-232 (KFHFTSSHH) are Mitochondrial matrix-facing. Residues 233 to 256 (FGFEAAAWYWHFVDVVWLFLYVSI) form a helical membrane-spanning segment. The Mitochondrial intermembrane portion of the chain corresponds to 257 to 261 (YWWGS).

It belongs to the cytochrome c oxidase subunit 3 family. Component of the cytochrome c oxidase (complex IV, CIV), a multisubunit enzyme composed of 14 subunits. The complex is composed of a catalytic core of 3 subunits MT-CO1, MT-CO2 and MT-CO3, encoded in the mitochondrial DNA, and 11 supernumerary subunits COX4I, COX5A, COX5B, COX6A, COX6B, COX6C, COX7A, COX7B, COX7C, COX8 and NDUFA4, which are encoded in the nuclear genome. The complex exists as a monomer or a dimer and forms supercomplexes (SCs) in the inner mitochondrial membrane with NADH-ubiquinone oxidoreductase (complex I, CI) and ubiquinol-cytochrome c oxidoreductase (cytochrome b-c1 complex, complex III, CIII), resulting in different assemblies (supercomplex SCI(1)III(2)IV(1) and megacomplex MCI(2)III(2)IV(2)).

The protein resides in the mitochondrion inner membrane. It carries out the reaction 4 Fe(II)-[cytochrome c] + O2 + 8 H(+)(in) = 4 Fe(III)-[cytochrome c] + 2 H2O + 4 H(+)(out). Functionally, component of the cytochrome c oxidase, the last enzyme in the mitochondrial electron transport chain which drives oxidative phosphorylation. The respiratory chain contains 3 multisubunit complexes succinate dehydrogenase (complex II, CII), ubiquinol-cytochrome c oxidoreductase (cytochrome b-c1 complex, complex III, CIII) and cytochrome c oxidase (complex IV, CIV), that cooperate to transfer electrons derived from NADH and succinate to molecular oxygen, creating an electrochemical gradient over the inner membrane that drives transmembrane transport and the ATP synthase. Cytochrome c oxidase is the component of the respiratory chain that catalyzes the reduction of oxygen to water. Electrons originating from reduced cytochrome c in the intermembrane space (IMS) are transferred via the dinuclear copper A center (CU(A)) of subunit 2 and heme A of subunit 1 to the active site in subunit 1, a binuclear center (BNC) formed by heme A3 and copper B (CU(B)). The BNC reduces molecular oxygen to 2 water molecules using 4 electrons from cytochrome c in the IMS and 4 protons from the mitochondrial matrix. The chain is Cytochrome c oxidase subunit 3 (MT-CO3) from Tragelaphus strepsiceros (Greater kudu).